Here is a 539-residue protein sequence, read N- to C-terminus: Chaperonin GroEL (539 aa).

ATP-binding positions include 29–32 (TLGP), 86–90 (DGTTT), G413, 477–479 (DAL), and D493.

Belongs to the chaperonin (HSP60) family. As to quaternary structure, forms a cylinder of 14 subunits composed of two heptameric rings stacked back-to-back. Interacts with the co-chaperonin GroES.

The protein localises to the cytoplasm. It catalyses the reaction ATP + H2O + a folded polypeptide = ADP + phosphate + an unfolded polypeptide.. Functionally, together with its co-chaperonin GroES, plays an essential role in assisting protein folding. The GroEL-GroES system forms a nano-cage that allows encapsulation of the non-native substrate proteins and provides a physical environment optimized to promote and accelerate protein folding. The sequence is that of Chaperonin GroEL from Clostridium perfringens (strain 13 / Type A).